A 381-amino-acid chain; its full sequence is Probable tRNA sulfurtransferase (381 aa).

The 104-residue stretch at 57 to 160 (EKGIEKLKSV…NKAYVYSKKI (104 aa)) folds into the THUMP domain. ATP-binding positions include 177 to 178 (ML), 202 to 203 (YF), Arg259, Gly281, and Gln290.

It belongs to the ThiI family.

Its subcellular location is the cytoplasm. The catalysed reaction is [ThiI sulfur-carrier protein]-S-sulfanyl-L-cysteine + a uridine in tRNA + 2 reduced [2Fe-2S]-[ferredoxin] + ATP + H(+) = [ThiI sulfur-carrier protein]-L-cysteine + a 4-thiouridine in tRNA + 2 oxidized [2Fe-2S]-[ferredoxin] + AMP + diphosphate. It catalyses the reaction [ThiS sulfur-carrier protein]-C-terminal Gly-Gly-AMP + S-sulfanyl-L-cysteinyl-[cysteine desulfurase] + AH2 = [ThiS sulfur-carrier protein]-C-terminal-Gly-aminoethanethioate + L-cysteinyl-[cysteine desulfurase] + A + AMP + 2 H(+). It participates in cofactor biosynthesis; thiamine diphosphate biosynthesis. In terms of biological role, catalyzes the ATP-dependent transfer of a sulfur to tRNA to produce 4-thiouridine in position 8 of tRNAs, which functions as a near-UV photosensor. Also catalyzes the transfer of sulfur to the sulfur carrier protein ThiS, forming ThiS-thiocarboxylate. This is a step in the synthesis of thiazole, in the thiamine biosynthesis pathway. The sulfur is donated as persulfide by IscS. The protein is Probable tRNA sulfurtransferase of Clostridium kluyveri (strain NBRC 12016).